The sequence spans 303 residues: Sulfotransferase 6B1 (303 aa).

65-70 (KCGSNW) is a binding site for 3'-phosphoadenylyl sulfate. H118 functions as the Proton acceptor in the catalytic mechanism. 3'-phosphoadenylyl sulfate is bound by residues R140, S148, Y203, 237–242 (STFQAM), and 259–261 (RKG).

Belongs to the sulfotransferase 1 family. In terms of tissue distribution, specifically expressed in kidney and testis.

It localises to the cytoplasm. It is found in the cytosol. It catalyses the reaction thyroxine + 3'-phosphoadenylyl sulfate = thyroxine sulfate + adenosine 3',5'-bisphosphate + H(+). Sulfotransferase that utilizes 3'-phospho-5'-adenylyl sulfate (PAPS) as sulfonate donor to catalyze the sulfate conjugation of thyroxine. Involved in the metabolism of thyroxine. This Homo sapiens (Human) protein is Sulfotransferase 6B1 (SULT6B1).